The following is a 402-amino-acid chain: Deoxyguanosinetriphosphate triphosphohydrolase-like protein (402 aa).

A disordered region spans residues 20–39; it reads PAFSRGRLVPEPESPTRTPF. The region spanning 73-217 is the HD domain; it reads RLTHTIEVAQ…AAIADDIAYN (145 aa).

This sequence belongs to the dGTPase family. Type 2 subfamily.

This Brucella canis (strain ATCC 23365 / NCTC 10854 / RM-666) protein is Deoxyguanosinetriphosphate triphosphohydrolase-like protein.